The following is a 307-amino-acid chain: Porphobilinogen deaminase (307 aa).

S-(dipyrrolylmethanemethyl)cysteine is present on cysteine 241.

Belongs to the HMBS family. Monomer. It depends on dipyrromethane as a cofactor.

The enzyme catalyses 4 porphobilinogen + H2O = hydroxymethylbilane + 4 NH4(+). It functions in the pathway porphyrin-containing compound metabolism; protoporphyrin-IX biosynthesis; coproporphyrinogen-III from 5-aminolevulinate: step 2/4. Its function is as follows. Tetrapolymerization of the monopyrrole PBG into the hydroxymethylbilane pre-uroporphyrinogen in several discrete steps. This Coxiella burnetii (strain CbuG_Q212) (Coxiella burnetii (strain Q212)) protein is Porphobilinogen deaminase.